Here is a 144-residue protein sequence, read N- to C-terminus: Large ribosomal subunit protein uL15 (144 aa).

The segment at 1 to 52 (MRLNSLSPAEGAKHSAKRLGRGISSGLGKTGGRGHKGQKSRTGGGVRRGFEG) is disordered.

Belongs to the universal ribosomal protein uL15 family. As to quaternary structure, part of the 50S ribosomal subunit.

Its function is as follows. Binds to the 23S rRNA. The polypeptide is Large ribosomal subunit protein uL15 (Actinobacillus pleuropneumoniae serotype 7 (strain AP76)).